The following is a 94-amino-acid chain: Small ribosomal subunit protein bS18 (94 aa).

This sequence belongs to the bacterial ribosomal protein bS18 family. In terms of assembly, part of the 30S ribosomal subunit. Forms a tight heterodimer with protein bS6.

Binds as a heterodimer with protein bS6 to the central domain of the 16S rRNA, where it helps stabilize the platform of the 30S subunit. The chain is Small ribosomal subunit protein bS18 from Polaromonas naphthalenivorans (strain CJ2).